The chain runs to 263 residues: Glutathione S-transferase F8, chloroplastic (263 aa).

A chloroplast-targeting transit peptide spans 1 to 49 (MGAIQARLPLFLSPPSIKHHTFLHSSSSNSNFKIRSNKSSSSSSSSIIM). The GST N-terminal domain occupies 50–131 (ASIKVHGVPM…YLAEEYSEKG (82 aa)). Glutathione is bound by residues 60–61 (ST), 89–90 (HK), 102–103 (QI), and 115–116 (ES). A GST C-terminal domain is found at 139–263 (CKKVKATTNV…WAKVIDLQKQ (125 aa)). T177 bears the Phosphothreonine mark.

Belongs to the GST superfamily. Phi family. As to expression, isoform 1 is predominantly expressed in leaves and isoform 2 in roots.

Its subcellular location is the plastid. It is found in the chloroplast. It localises to the cytoplasm. The protein resides in the cytosol. It catalyses the reaction RX + glutathione = an S-substituted glutathione + a halide anion + H(+). In terms of biological role, in vitro, possesses glutathione S-transferase activity toward 1-chloro-2,4-dinitrobenzene (CDNB) and glutathione peroxidase activity toward cumene hydroperoxide and linoleic acid-13-hydroperoxide. May be involved in the conjugation of reduced glutathione to a wide number of exogenous and endogenous hydrophobic electrophiles and have a detoxification role against certain herbicides. The protein is Glutathione S-transferase F8, chloroplastic (GSTF8) of Arabidopsis thaliana (Mouse-ear cress).